The chain runs to 230 residues: CRP-like protein Clp (230 aa).

18–139 (PSLALDAGTI…APKILYAIGV (122 aa)) serves as a coordination point for a nucleoside 3',5'-cyclic phosphate. Residues 158–230 (LDVTDRIVRT…GKTVVLYGTR (73 aa)) form the HTH crp-type domain. A DNA-binding region (H-T-H motif) is located at residues 190 to 209 (RQELARLVGCSREMAGRVLK).

Homodimer.

The protein resides in the cytoplasm. Allosterically inhibited by cyclic di-GMP (c-di-GMP), which binds to Clp and abolishes its ability to bind its target gene promoter. Global transcriptional regulator that regulates virulence factors production by activating or repressing the expression of a large set of genes in diffusible signal factor (DSF) pathway. The protein is CRP-like protein Clp (clp) of Xanthomonas axonopodis pv. citri (strain 306).